The primary structure comprises 877 residues: Alanine--tRNA ligase (877 aa).

Residues histidine 564, histidine 568, cysteine 666, and histidine 670 each contribute to the Zn(2+) site.

This sequence belongs to the class-II aminoacyl-tRNA synthetase family. Requires Zn(2+) as cofactor.

Its subcellular location is the cytoplasm. The catalysed reaction is tRNA(Ala) + L-alanine + ATP = L-alanyl-tRNA(Ala) + AMP + diphosphate. Functionally, catalyzes the attachment of alanine to tRNA(Ala) in a two-step reaction: alanine is first activated by ATP to form Ala-AMP and then transferred to the acceptor end of tRNA(Ala). Also edits incorrectly charged Ser-tRNA(Ala) and Gly-tRNA(Ala) via its editing domain. This chain is Alanine--tRNA ligase, found in Pelotomaculum thermopropionicum (strain DSM 13744 / JCM 10971 / SI).